The chain runs to 77 residues: Translation initiation factor IF-1, chloroplastic (77 aa).

Positions 1 to 72 (MRKQNLIEME…TKGRITYRLR (72 aa)) constitute an S1-like domain.

The protein belongs to the IF-1 family. As to quaternary structure, component of the 30S ribosomal translation pre-initiation complex which assembles on the 30S ribosome in the order IF-2 and IF-3, IF-1 and N-formylmethionyl-tRNA(fMet); mRNA recruitment can occur at any time during PIC assembly.

The protein resides in the plastid. Its subcellular location is the chloroplast. In terms of biological role, one of the essential components for the initiation of protein synthesis. Stabilizes the binding of IF-2 and IF-3 on the 30S subunit to which N-formylmethionyl-tRNA(fMet) subsequently binds. Helps modulate mRNA selection, yielding the 30S pre-initiation complex (PIC). Upon addition of the 50S ribosomal subunit IF-1, IF-2 and IF-3 are released leaving the mature 70S translation initiation complex. This Staurastrum punctulatum (Green alga) protein is Translation initiation factor IF-1, chloroplastic.